We begin with the raw amino-acid sequence, 596 residues long: Pheromone-processing carboxypeptidase KEX1 (596 aa).

A signal peptide spans 1–17; the sequence is MLGLATTVTLESSGCSS. At 18-486 the chain is on the lumenal side; that stretch reads KMCFRLLCSV…KIAAWEAYYK (469 aa). N54 and N90 each carry an N-linked (GlcNAc...) asparagine glycan. The active site involves S154. N-linked (GlcNAc...) asparagine glycans are attached at residues N177, N367, N372, N404, N412, and N464. The segment at 447-469 is disordered; the sequence is SRIDGLKGAPTSVGAHPNSTTAE. The helical transmembrane segment at 487–507 threads the bilayer; that stretch reads SGEVALVVVAIAASLWGFFIW. The Cytoplasmic portion of the chain corresponds to 508 to 596; that stretch reads RSKRREKGLE…QSHAGMGKSR (89 aa). A disordered region spans residues 539 to 596; it reads KRRGRMDVESAPRPDEAELETLYNAAEGSDPQDGEENFSDGKGDNEKAQSHAGMGKSR. 2 stretches are compositionally biased toward basic and acidic residues: residues 543–554 and 577–587; these read RMDVESAPRPDE and SDGKGDNEKAQ.

It belongs to the peptidase S10 family.

The protein resides in the golgi apparatus. Its subcellular location is the trans-Golgi network membrane. The catalysed reaction is Preferential release of a C-terminal arginine or lysine residue.. Protease with a carboxypeptidase B-like function involved in the C-terminal processing of the lysine and arginine residues from protein precursors. Promotes cell fusion and is involved in the programmed cell death. In Arthroderma benhamiae (strain ATCC MYA-4681 / CBS 112371) (Trichophyton mentagrophytes), this protein is Pheromone-processing carboxypeptidase KEX1 (KEX1).